The primary structure comprises 312 residues: Small ribosomal subunit protein uS2 (312 aa).

Belongs to the universal ribosomal protein uS2 family. Component of the small ribosomal subunit. Mature ribosomes consist of a small (40S) and a large (60S) subunit. The 40S subunit contains about 33 different proteins and 1 molecule of RNA (18S). The 60S subunit contains about 49 different proteins and 3 molecules of RNA (25S, 5.8S and 5S). Interacts with ribosomal protein S21.

Its subcellular location is the cytoplasm. Functionally, required for the assembly and/or stability of the 40S ribosomal subunit. Required for the processing of the 20S rRNA-precursor to mature 18S rRNA in a late step of the maturation of 40S ribosomal subunits. The polypeptide is Small ribosomal subunit protein uS2 (Vitis vinifera (Grape)).